The sequence spans 266 residues: Nuclease (266 aa).

A signal peptide spans 1–21; it reads MRFNNKMLALAALLFAAQASA. An intrachain disulfide couples Cys30 to Cys34. The Proton acceptor role is filled by His110. A Mg(2+)-binding site is contributed by Asn140. A disulfide bridge links Cys222 with Cys264.

The protein belongs to the DNA/RNA non-specific endonuclease family. Homodimer. Requires Mg(2+) as cofactor.

The protein localises to the secreted. The enzyme catalyses Endonucleolytic cleavage to 5'-phosphomononucleotide and 5'-phosphooligonucleotide end-products.. Its function is as follows. Catalyzes the hydrolysis of both DNA and RNA, double- or single-stranded, at the 3'position of the phosphodiester bond to produce 5'-phosphorylated mono-, di-, tri- and tetranucleotides. DNA is a slightly better substrate than RNA. The chain is Nuclease (nucA) from Serratia marcescens.